Consider the following 591-residue polypeptide: Splicing factor U2af large subunit A (591 aa).

The interval 1–215 (MAEHDAPPES…QSKRMSGFDQ (215 aa)) is disordered. Positions 27-36 (SPQQDAQPLS) are enriched in polar residues. Basic and acidic residues-rich tracts occupy residues 37–79 (SRDR…SRDR) and 157–191 (RERS…DRDG). 2 consecutive RRM domains span residues 272-355 (RRVY…RPTD) and 392-470 (DRIF…RANQ).

Belongs to the splicing factor SR family.

Its subcellular location is the nucleus. Its function is as follows. Necessary for the splicing of pre-mRNA. This is Splicing factor U2af large subunit A (U2AF65A) from Triticum aestivum (Wheat).